A 269-amino-acid chain; its full sequence is Ethylene-responsive transcription factor ERN1 (269 aa).

Positions 1 to 15 are enriched in polar residues; that stretch reads MEIQFQQPNLQQHQK. 2 disordered regions span residues 1–36 and 128–157; these read MEIQ…NKFV and DVPA…LSSG. Positions 34–91 form a DNA-binding region, AP2/ERF; sequence KFVGVRQRPSGRWVAEIKDTTQKIRMWLGTFETAEEAARAYDEAACLLRGSNTRTNFI. Low complexity predominate over residues 128–146; sequence DVPAPSASTTSTSSNTSNS.

Belongs to the AP2/ERF transcription factor family. ERF subfamily.

The protein resides in the nucleus. In terms of biological role, transcription factor involved in the symbiotic nodule signaling pathway in response to rhizobial stimulation. Functions as a transcriptional regulator required for root infection by symbiotic rhizobia, infection thread (IT) formation, and nodule development. May coordinate these processes. Functions downstream of the CCAMK-CYCLOPS complex. Probably not involved in arbuscular mycorrhizal (AM) symbiosis. The protein is Ethylene-responsive transcription factor ERN1 of Lotus japonicus (Lotus corniculatus var. japonicus).